Reading from the N-terminus, the 178-residue chain is Large ribosomal subunit protein uL6 (178 aa).

This sequence belongs to the universal ribosomal protein uL6 family. Part of the 50S ribosomal subunit.

This protein binds to the 23S rRNA, and is important in its secondary structure. It is located near the subunit interface in the base of the L7/L12 stalk, and near the tRNA binding site of the peptidyltransferase center. In Leifsonia xyli subsp. xyli (strain CTCB07), this protein is Large ribosomal subunit protein uL6.